The chain runs to 838 residues: MLKAIAHKVFGSRNERYLKGLRPLIEAINAFEPQIQALSDDAMRARVAELRQEVAEGRPLDDVLPETFAIVREASVRSLGMRHYDVQLIGGITLHQGKIAEMKTGEGKTLVATLPVVLNALSGKGVHLITVNDYLAKRDAAWMGKLYGFLGLSVGVIVHGLDDQQRQAAYGADITYGTNNEFGFDYLRDNMKFYQEQLVQRPLNFAIVDEVDSILIDEARTPLIISGQAEDSSTLYARVNALIPMLRRETHFTVDEKARTVLLTDEGVARMEDVLKIDNLFDPANITLQHHVLQALKAHHIFQRDVDYVVKDGQVIIVDEFTGRLMPGRRYSDGLHQALEAKELVQVEAENQTLATITFQNYFRMYKKLSGMTGTADTEAVEFREIYGLEVISIPTNKPMVRKDFPDLVYKTQREKFEAIAADVKDLHKRGQPVLVGTVSIEKSELLSDMLKKTGVPHDVLNAKNHEKEAEIVALAGHAGKVTIATNMAGRGTDIVLGPGVTDLGGLHILGTERHESRRIDNQLRGRSGRQGDPGSSRFYLALDDDLMRLFGSDRLKGLMDKLGMEDGEPIENRMVSRAIENAQKRVEAHNFEIRKQLLDYDNVMNQQREVIYSRRRELMGSDEPETFVQEHIEEIVDEIFAPFAALKGEPDPELLEVAAAQIEDILDYKIELADGGEAEKQAVLEAVTGRQRELAETAGAHYKEVARYFLLDSLDRHWKEHLLSMDHLRDGIGLRGYGQKDPKQEYKREGFELFQQLIYNMRDAAIRALSRVRIRAEVQEQEFQHKDETANVQYSGPAESAEDAKKEPKRREAPKVGRNDPCPCGSGKKYKKCHGAK.

Residues glutamine 87, 105 to 109, and aspartate 494 each bind ATP; that span reads GEGKT. 2 stretches are compositionally biased toward basic and acidic residues: residues 781-790 and 803-819; these read EQEFQHKDET and EDAK…KVGR. A disordered region spans residues 781–838; the sequence is EQEFQHKDETANVQYSGPAESAEDAKKEPKRREAPKVGRNDPCPCGSGKKYKKCHGAK. Zn(2+)-binding residues include cysteine 823, cysteine 825, cysteine 834, and histidine 835. Basic residues predominate over residues 829-838; it reads KKYKKCHGAK.

This sequence belongs to the SecA family. Monomer and homodimer. Part of the essential Sec protein translocation apparatus which comprises SecA, SecYEG and auxiliary proteins SecDF-YajC and YidC. It depends on Zn(2+) as a cofactor.

Its subcellular location is the cell inner membrane. The protein localises to the cytoplasm. The catalysed reaction is ATP + H2O + cellular proteinSide 1 = ADP + phosphate + cellular proteinSide 2.. In terms of biological role, part of the Sec protein translocase complex. Interacts with the SecYEG preprotein conducting channel. Has a central role in coupling the hydrolysis of ATP to the transfer of proteins into and across the cell membrane, serving as an ATP-driven molecular motor driving the stepwise translocation of polypeptide chains across the membrane. This Solidesulfovibrio magneticus (strain ATCC 700980 / DSM 13731 / RS-1) (Desulfovibrio magneticus) protein is Protein translocase subunit SecA.